The sequence spans 87 residues: Small ribosomal subunit protein uS17 (87 aa).

Belongs to the universal ribosomal protein uS17 family. Part of the 30S ribosomal subunit.

Functionally, one of the primary rRNA binding proteins, it binds specifically to the 5'-end of 16S ribosomal RNA. This is Small ribosomal subunit protein uS17 from Alcanivorax borkumensis (strain ATCC 700651 / DSM 11573 / NCIMB 13689 / SK2).